We begin with the raw amino-acid sequence, 176 residues long: Cytochrome b (176 aa).

The next 3 membrane-spanning stretches (helical) occupy residues 33–53 (FGSL…FLAM), 77–98 (WVLR…YLHV), and 113–133 (WNVG…GYVL). Heme b is bound by residues H83 and H97.

It belongs to the cytochrome b family. The cytochrome bc1 complex contains 11 subunits: 3 respiratory subunits (MT-CYB, CYC1 and UQCRFS1), 2 core proteins (UQCRC1 and UQCRC2) and 6 low-molecular weight proteins (UQCRH/QCR6, UQCRB/QCR7, UQCRQ/QCR8, UQCR10/QCR9, UQCR11/QCR10 and a cleavage product of UQCRFS1). This cytochrome bc1 complex then forms a dimer. Heme b is required as a cofactor.

It localises to the mitochondrion inner membrane. Component of the ubiquinol-cytochrome c reductase complex (complex III or cytochrome b-c1 complex) that is part of the mitochondrial respiratory chain. The b-c1 complex mediates electron transfer from ubiquinol to cytochrome c. Contributes to the generation of a proton gradient across the mitochondrial membrane that is then used for ATP synthesis. The protein is Cytochrome b (MT-CYB) of Corynorhinus rafinesquii (Rafinesque's big-eared bat).